The sequence spans 101 residues: Large ribosomal subunit protein eL30 (101 aa).

Belongs to the eukaryotic ribosomal protein eL30 family.

This is Large ribosomal subunit protein eL30 from Pyrobaculum calidifontis (strain DSM 21063 / JCM 11548 / VA1).